A 117-amino-acid chain; its full sequence is G antigen 1 (117 aa).

A disordered region spans residues 1-117 (MSWRGRSTYY…PEEGEGQSQC (117 aa)). 2 stretches are compositionally biased toward acidic residues: residues 32–45 (FSDE…EEGE) and 87–96 (ECEDGPDGQE).

Belongs to the GAGE family. In terms of tissue distribution, expressed in a variety of tumor tissues but not in normal tissues, except testis.

In terms of biological role, antigen, recognized on melanoma by autologous cytolytic T-lymphocytes. This chain is G antigen 1, found in Homo sapiens (Human).